The sequence spans 341 residues: 5-formaminoimidazole-4-carboxamide-1-(beta)-D-ribofuranosyl 5'-monophosphate synthetase (341 aa).

Residues His-10 and Thr-77 each contribute to the 5-amino-1-(5-phospho-beta-D-ribosyl)imidazole-4-carboxamide site. The region spanning 106–317 (DRSLKERLMR…YYGLLFDEPI (212 aa)) is the ATP-grasp domain. Residues 132-188 (DTLV…VLAY) and Glu-210 contribute to the ATP site. Asn-238 provides a ligand contact to 5-amino-1-(5-phospho-beta-D-ribosyl)imidazole-4-carboxamide. Residues Glu-277 and Glu-290 each coordinate Mg(2+).

Belongs to the phosphohexose mutase family. Requires Mg(2+) as cofactor. Mn(2+) serves as cofactor.

It carries out the reaction 5-amino-1-(5-phospho-beta-D-ribosyl)imidazole-4-carboxamide + formate + ATP = 5-formamido-1-(5-phospho-D-ribosyl)imidazole-4-carboxamide + ADP + phosphate. The protein operates within purine metabolism; IMP biosynthesis via de novo pathway; 5-formamido-1-(5-phospho-D-ribosyl)imidazole-4-carboxamide from 5-amino-1-(5-phospho-D-ribosyl)imidazole-4-carboxamide (formate route): step 1/1. In terms of biological role, catalyzes the ATP- and formate-dependent formylation of 5-aminoimidazole-4-carboxamide-1-beta-d-ribofuranosyl 5'-monophosphate (AICAR) to 5-formaminoimidazole-4-carboxamide-1-beta-d-ribofuranosyl 5'-monophosphate (FAICAR) in the absence of folates. This Cenarchaeum symbiosum (strain A) protein is 5-formaminoimidazole-4-carboxamide-1-(beta)-D-ribofuranosyl 5'-monophosphate synthetase.